We begin with the raw amino-acid sequence, 359 residues long: ATP-dependent 6-phosphofructokinase 1 (359 aa).

Residues Gly14, 78–79 (KG), and 115–118 (GDGS) each bind ATP. Asp116 is a Mg(2+) binding site. Residues 139–141 (TID), Arg176, 183–185 (MGR), Glu236, Arg277, and 283–286 (HIQR) contribute to the substrate site. The active-site Proton acceptor is Asp141.

It belongs to the phosphofructokinase type A (PFKA) family. Mixed-substrate PFK group III subfamily. Homodimer or homotetramer. The cofactor is Mg(2+).

It is found in the cytoplasm. The enzyme catalyses beta-D-fructose 6-phosphate + ATP = beta-D-fructose 1,6-bisphosphate + ADP + H(+). Its pathway is carbohydrate degradation; glycolysis; D-glyceraldehyde 3-phosphate and glycerone phosphate from D-glucose: step 3/4. In terms of biological role, catalyzes the phosphorylation of D-fructose 6-phosphate to fructose 1,6-bisphosphate by ATP, the first committing step of glycolysis. This chain is ATP-dependent 6-phosphofructokinase 1, found in Nostoc sp. (strain PCC 7120 / SAG 25.82 / UTEX 2576).